Here is a 940-residue protein sequence, read N- to C-terminus: UvrABC system protein A (940 aa).

31–38 (GLSGSGKS) contacts ATP. A C4-type zinc finger spans residues 252-279 (CPHCGYSMQELEPRLFSFNNPAGACGTC). ABC transporter domains lie at 309–586 (WDQK…PDSL) and 606–936 (RDKN…RFLK). 639–646 (GVSGSGKS) lines the ATP pocket. Residues 739–765 (CEACQGDGVIKVEMHFLPDVYVPCDVC) form a C4-type zinc finger.

This sequence belongs to the ABC transporter superfamily. UvrA family. Forms a heterotetramer with UvrB during the search for lesions.

The protein resides in the cytoplasm. In terms of biological role, the UvrABC repair system catalyzes the recognition and processing of DNA lesions. UvrA is an ATPase and a DNA-binding protein. A damage recognition complex composed of 2 UvrA and 2 UvrB subunits scans DNA for abnormalities. When the presence of a lesion has been verified by UvrB, the UvrA molecules dissociate. The protein is UvrABC system protein A of Vibrio vulnificus (strain CMCP6).